A 66-amino-acid polypeptide reads, in one-letter code: Small vasohibin-binding protein (66 aa).

Basic and acidic residues predominate over residues 1–23; sequence MDPPARKEKTKVKESVSRVEKAK. Residues 1–31 form a disordered region; sequence MDPPARKEKTKVKESVSRVEKAKQKSAQQEL. Residues 5–52 are a coiled coil; it reads ARKEKTKVKESVSRVEKAKQKSAQQELKQRQRAEIYALNRVMTELEQQ.

Belongs to the SVBP family. In terms of assembly, interacts with VASH1 and VASH2.

It localises to the cytoplasm. The protein resides in the secreted. Its subcellular location is the cytoskeleton. Its function is as follows. Enhances the tyrosine carboxypeptidase activity of VASH1 and VASH2, thereby promoting the removal of the C-terminal tyrosine residue of alpha-tubulin. This activity is critical for spindle function and accurate chromosome segregation during mitosis since microtubule detyronisation regulates mitotic spindle length and postioning. Also required to enhance the solubility and secretion of VASH1 and VASH2. Plays a role in axon and excitatory synapse formation. The sequence is that of Small vasohibin-binding protein from Homo sapiens (Human).